We begin with the raw amino-acid sequence, 216 residues long: Regulator of G-protein signaling 19 (216 aa).

A compositionally biased stretch (basic and acidic residues) spans 1 to 19 (MPTPHEAEKQHTGPEEADR). The segment at 1–30 (MPTPHEAEKQHTGPEEADRPPSMSSHDAAP) is disordered. At S24 the chain carries Phosphoserine; by CK2. One can recognise an RGS domain in the interval 90–206 (SFDKLMHSPT…LTSPTYRSLL (117 aa)). S97 carries the phosphoserine modification. A Phosphoserine; by MAPK1 and MAPK3 modification is found at S151. Positions 207-216 (LQGAPQSSEA) are interaction with GIPC.

Interacts with GIPC PDZ domain. Interacts with GNAO1. In terms of processing, fatty acylated. Heavily palmitoylated in the cysteine string motif. Phosphorylated, mainly on serine residues.

The protein resides in the membrane. In terms of biological role, inhibits signal transduction by increasing the GTPase activity of G protein alpha subunits thereby driving them into their inactive GDP-bound form. Binds to G-alpha subfamily 1 members, predominantly to G(i)-alpha-3. Activity on G(z)-alpha is inhibited by phosphorylation and palmitoylation of the G-protein. The polypeptide is Regulator of G-protein signaling 19 (Rgs19) (Rattus norvegicus (Rat)).